We begin with the raw amino-acid sequence, 309 residues long: Probable porphobilinogen deaminase (309 aa).

Cys-233 carries the post-translational modification S-(dipyrrolylmethanemethyl)cysteine.

Belongs to the HMBS family. Dipyrromethane serves as cofactor.

The catalysed reaction is 4 porphobilinogen + H2O = hydroxymethylbilane + 4 NH4(+). The protein operates within porphyrin-containing compound metabolism; protoporphyrin-IX biosynthesis; coproporphyrinogen-III from 5-aminolevulinate: step 2/4. In terms of biological role, tetrapolymerization of the monopyrrole PBG into the hydroxymethylbilane pre-uroporphyrinogen in several discrete steps. The sequence is that of Probable porphobilinogen deaminase from Methanococcoides burtonii (strain DSM 6242 / NBRC 107633 / OCM 468 / ACE-M).